Reading from the N-terminus, the 327-residue chain is MKSFTATALAALLAQQAAAHSTFQQLWVDGTDFGSQCARLPQSNSPITNYNSNDMRCNIIGTRPQVKCPVRAGGTVTVEMHAQNGDRSCSQEAIGGAHHGPVSVYLTKVSDALTADGSTGWFKIFDDGWRKNPSGRVGDDDFWGTKDLNACCGKMNVKIPSDIPSGDYLLRAEAIALHAAGGAGGAQPYMTCYQITVSGGGSASPPTVSIPGHFKASDPGVQVNIHGAMTNYVIPGPAVYAGGSTKVAGSACSGCEATCAVGSSPTTSLTPPVSTSTPAPGNGGGGSPGGCTVQKYGQCGGQGYTGCTTCAAGSTCNTTNQWYHQCV.

The signal sequence occupies residues 1–19 (MKSFTATALAALLAQQAAA). Cu(2+) contacts are provided by H20 and H98. C68 and C192 form a disulfide bridge. 2 residues coordinate O2: H178 and Q187. Residue Y189 participates in Cu(2+) binding. Residues 264–280 (SPTTSLTPPVSTSTPAP) are compositionally biased toward low complexity. Residues 264 to 284 (SPTTSLTPPVSTSTPAPGNGG) form a disordered region. The CBM1 domain occupies 291 to 327 (CTVQKYGQCGGQGYTGCTTCAAGSTCNTTNQWYHQCV). Residue N317 is glycosylated (N-linked (GlcNAc...) asparagine).

The protein belongs to the polysaccharide monooxygenase AA9 family. Cu(2+) serves as cofactor.

The protein localises to the secreted. It catalyses the reaction [(1-&gt;4)-beta-D-glucosyl]n+m + reduced acceptor + O2 = 4-dehydro-beta-D-glucosyl-[(1-&gt;4)-beta-D-glucosyl]n-1 + [(1-&gt;4)-beta-D-glucosyl]m + acceptor + H2O.. In terms of biological role, lytic polysaccharide monooxygenase (LPMO) that depolymerizes crystalline and amorphous polysaccharides via the oxidation of scissile alpha- or beta-(1-4)-glycosidic bonds, yielding C1 or C4 oxidation products. Catalysis by LPMOs requires the reduction of the active-site copper from Cu(II) to Cu(I) by a reducing agent and H(2)O(2) or O(2) as a cosubstrate. This chain is AA9 family lytic polysaccharide monooxygenase B (LPMO9B), found in Podospora anserina (strain S / ATCC MYA-4624 / DSM 980 / FGSC 10383) (Pleurage anserina).